The following is a 296-amino-acid chain: Thymidylate synthase (296 aa).

DUMP contacts are provided by residues R23 and 157-158; that span reads RR. C177 (nucleophile) is an active-site residue. DUMP is bound by residues 198 to 201, N209, and 239 to 241; these read RSAD and HIY. D201 contacts (6R)-5,10-methylene-5,6,7,8-tetrahydrofolate. A295 is a (6R)-5,10-methylene-5,6,7,8-tetrahydrofolate binding site.

The protein belongs to the thymidylate synthase family. Bacterial-type ThyA subfamily. In terms of assembly, homodimer.

It localises to the cytoplasm. It catalyses the reaction dUMP + (6R)-5,10-methylene-5,6,7,8-tetrahydrofolate = 7,8-dihydrofolate + dTMP. It participates in pyrimidine metabolism; dTTP biosynthesis. Its function is as follows. Catalyzes the reductive methylation of 2'-deoxyuridine-5'-monophosphate (dUMP) to 2'-deoxythymidine-5'-monophosphate (dTMP) while utilizing 5,10-methylenetetrahydrofolate (mTHF) as the methyl donor and reductant in the reaction, yielding dihydrofolate (DHF) as a by-product. This enzymatic reaction provides an intracellular de novo source of dTMP, an essential precursor for DNA biosynthesis. In Zymomonas mobilis subsp. mobilis (strain ATCC 31821 / ZM4 / CP4), this protein is Thymidylate synthase.